Consider the following 526-residue polypeptide: GMP synthase [glutamine-hydrolyzing] (526 aa).

The Glutamine amidotransferase type-1 domain maps to 9–208 (RILILDFGSQ…VKDICGCECL (200 aa)). The Nucleophile role is filled by C86. Active-site residues include H182 and E184. In terms of domain architecture, GMPS ATP-PPase spans 209-401 (WTPATIIDDA…LGLPYDMLYR (193 aa)). 236–242 (SGGVDSS) lines the ATP pocket.

As to quaternary structure, homodimer.

The catalysed reaction is XMP + L-glutamine + ATP + H2O = GMP + L-glutamate + AMP + diphosphate + 2 H(+). Its pathway is purine metabolism; GMP biosynthesis; GMP from XMP (L-Gln route): step 1/1. Functionally, catalyzes the synthesis of GMP from XMP. The sequence is that of GMP synthase [glutamine-hydrolyzing] from Aeromonas salmonicida (strain A449).